Reading from the N-terminus, the 895-residue chain is Zinc finger protein 574 (895 aa).

3 consecutive C2H2-type zinc fingers follow at residues 16–38, 76–98, and 126–148; these read YVCSECNQLYGSLEEVLMHQNSH, YQCLECGQLLMSPSQLLEHQELH, and YECVDCKALFASQELWLNHRQTH. Phosphoserine is present on serine 164. The segment at 214 to 236 adopts a C2H2-type 4 zinc-finger fold; that stretch reads YKCSECSQLFQLPADFLEHQATH. Positions 239 to 301 are disordered; the sequence is APVPESQEPA…RARRNNSGEA (63 aa). Over residues 247-257 the composition is skewed to polar residues; that stretch reads PALQQEVQASS. The segment covering 274–287 has biased composition (basic and acidic residues); sequence HSYELRNGEAIGRD. Serine 298 is modified (phosphoserine). 4 C2H2-type zinc fingers span residues 309-331, 336-358, 364-386, and 392-413; these read LFCSACDQLFLSPHQLQQHLRSH, FKCPLCSRVFPSPSSLDQHLGDH, FLCVDCGLAFGTEALLLAHRRAH, and HSCPCGKTFVNLTKFLYHRRTH. Positions 434 to 460 are disordered; that stretch reads FPEPAPAETGEPEAPEPPVSEETSAGP. 6 C2H2-type zinc fingers span residues 466 to 489, 495 to 517, 523 to 545, 551 to 573, 579 to 601, and 607 to 630; these read YRCLLCSREFGKALQLTRHQRFVH, HKCSICGKMFKKKSHVRNHLRTH, FPCPDCSKPFNSPANLARHRLTH, YRCGDCGKAFTQSSTLRQHRLVH, YRCQECGVRFHRPYRLLMHRYHH, and YKCRECPRSFLLRRLLEVHQLVVH. A C2H2-type 15; degenerate zinc finger spans residues 636–659; it reads HRCPSCGAAFPSSLRLREHRCAAA. The C2H2-type 16 zinc-finger motif lies at 667–689; the sequence is FECGTCGKKVGSAARLQAHEAAH. The disordered stretch occupies residues 687 to 732; sequence AAHAAAGPGEVLAKEPPAPRAPRATRAPVASPAALGGTATASPAPA. A compositionally biased stretch (low complexity) spans 707-731; sequence APRATRAPVASPAALGGTATASPAP. Phosphoserine is present on serine 717. A Phosphothreonine modification is found at threonine 724. A Phosphoserine modification is found at serine 728. 4 C2H2-type zinc fingers span residues 737–759, 765–787, 793–815, and 821–843; these read LECSECKKLFSTETSLQVHRRIH, YPCPDCGKAFRQSTHLKDHRRLH, FACEVCGKAFAISMRLAEHRRIH, and YSCPDCGKSYRSFSNLWKHRKTH. The residue at position 831 (arginine 831) is an Asymmetric dimethylarginine.

The protein belongs to the krueppel C2H2-type zinc-finger protein family.

The protein localises to the nucleus. May be involved in transcriptional regulation. The polypeptide is Zinc finger protein 574 (ZNF574) (Pongo abelii (Sumatran orangutan)).